We begin with the raw amino-acid sequence, 238 residues long: Probable RNA/DNA demethylase ALKBH6 (238 aa).

In terms of domain architecture, Fe2OG dioxygenase spans 96–227 (PANHVLVNQY…RVSLTIRRVP (132 aa)). Residues Asn-103 and Tyr-105 each coordinate 2-oxoglutarate. Residues His-114 and Asp-116 each coordinate Fe cation. Residues 138–161 (YEPRRPEDDDPTEQPRPPPRPTTS) are disordered. Residue His-182 coordinates Fe cation. Arg-218 and Ser-220 together coordinate 2-oxoglutarate.

The protein belongs to the alkB family. Interacts with VCPKMT. It depends on Fe(2+) as a cofactor. Widely expressed, with highest expression in testis and pancreas.

The protein localises to the cytoplasm. It localises to the nucleus. Its function is as follows. Probable Fe(2+)/2-oxoglutarate-dependent dioxygenase involved in oxidative demethylation of nucleic acids. Binds nucleic acids with a preference for ssDNA or ssRNA to other types of DNAs. May play a role in nucleic acid damage repair. This is Probable RNA/DNA demethylase ALKBH6 from Homo sapiens (Human).